The following is a 245-amino-acid chain: 1-(5-phosphoribosyl)-5-[(5-phosphoribosylamino)methylideneamino] imidazole-4-carboxamide isomerase (245 aa).

Aspartate 8 acts as the Proton acceptor in catalysis. Catalysis depends on aspartate 129, which acts as the Proton donor.

Belongs to the HisA/HisF family.

It is found in the cytoplasm. The catalysed reaction is 1-(5-phospho-beta-D-ribosyl)-5-[(5-phospho-beta-D-ribosylamino)methylideneamino]imidazole-4-carboxamide = 5-[(5-phospho-1-deoxy-D-ribulos-1-ylimino)methylamino]-1-(5-phospho-beta-D-ribosyl)imidazole-4-carboxamide. The protein operates within amino-acid biosynthesis; L-histidine biosynthesis; L-histidine from 5-phospho-alpha-D-ribose 1-diphosphate: step 4/9. This chain is 1-(5-phosphoribosyl)-5-[(5-phosphoribosylamino)methylideneamino] imidazole-4-carboxamide isomerase, found in Rhodopseudomonas palustris (strain BisA53).